Reading from the N-terminus, the 154-residue chain is Pro-corazonin (154 aa).

The N-terminal stretch at 1–19 (MLRLLLLPLFLFTLSMCMG) is a signal peptide. A Pyrrolidone carboxylic acid modification is found at Gln-20. The residue at position 30 (Asn-30) is an Asparagine amide. A propeptide spanning residues 70-154 (LERCLSQLQR…SAEPNVFGKH (85 aa)) is cleaved from the precursor.

The protein belongs to the corazonin family. As to expression, expression is restricted to 24 neurons in the larval CNS (8 in the brain and 16 in the ventral nerve cord) and 12-16 neurons in the pars lateralis of the adult brain.

It localises to the secreted. Functionally, cardioactive peptide. Corazonin is probably involved in the physiological regulation of the heart beat. Clock (Clk) and cycle (cyc) proteins negatively regulate Crz transcription in a cell-specific manner. The sequence is that of Pro-corazonin (Crz) from Drosophila erecta (Fruit fly).